We begin with the raw amino-acid sequence, 481 residues long: Methylenetetrahydrofolate--tRNA-(uracil-5-)-methyltransferase TrmFO (481 aa).

Residue 13-18 (GGGLAG) participates in FAD binding.

This sequence belongs to the MnmG family. TrmFO subfamily. It depends on FAD as a cofactor.

Its subcellular location is the cytoplasm. It carries out the reaction uridine(54) in tRNA + (6R)-5,10-methylene-5,6,7,8-tetrahydrofolate + NADH + H(+) = 5-methyluridine(54) in tRNA + (6S)-5,6,7,8-tetrahydrofolate + NAD(+). The catalysed reaction is uridine(54) in tRNA + (6R)-5,10-methylene-5,6,7,8-tetrahydrofolate + NADPH + H(+) = 5-methyluridine(54) in tRNA + (6S)-5,6,7,8-tetrahydrofolate + NADP(+). Functionally, catalyzes the folate-dependent formation of 5-methyl-uridine at position 54 (M-5-U54) in all tRNAs. The chain is Methylenetetrahydrofolate--tRNA-(uracil-5-)-methyltransferase TrmFO from Agrobacterium fabrum (strain C58 / ATCC 33970) (Agrobacterium tumefaciens (strain C58)).